The primary structure comprises 263 residues: Non-functional protein STAY-GREEN, chloroplastic (263 aa).

The N-terminal 54 residues, 1–54, are a transit peptide targeting the chloroplast; it reads MDTLTSAPLLTSKFKPSFSPQQKPCFPHRRRFENGKKKQSIVPVARLFGPAIFE.

Belongs to the staygreen family.

It localises to the plastid. Its subcellular location is the chloroplast. Its function is as follows. Non-functional protein probably interfering with the disassembling mechanism of the intact light-harvesting complex of photosystem II (LHCII) in the thylakoid membranes. Responsible for a stay-green phenotype. This Pisum sativum (Garden pea) protein is Non-functional protein STAY-GREEN, chloroplastic (SGR).